The sequence spans 354 residues: Guanine nucleotide-binding protein alpha-3 subunit (354 aa).

Gly2 is lipidated: N-myristoyl glycine. The S-palmitoyl cysteine moiety is linked to residue Cys4. One can recognise a G-alpha domain in the interval Lys33–Leu354. Residues Lys36–Thr49 are G1 motif. GTP is bound by residues Gly41–Ser48, Leu177–Thr183, Asp202–Gln206, Asn271–Asp274, and Ala326. Residues Ser48 and Thr183 each coordinate Mg(2+). The interval Asp175 to Thr183 is G2 motif. The G3 motif stretch occupies residues Ile198–Arg207. The segment at Ile267–Asp274 is G4 motif. A G5 motif region spans residues Thr324–Thr329.

The protein belongs to the G-alpha family. In terms of assembly, g proteins are composed of 3 units; alpha, beta and gamma. The alpha chain contains the guanine nucleotide binding site.

Guanine nucleotide-binding proteins (G proteins) are involved as modulators or transducers in various transmembrane signaling systems. This subunit is involved in cAMP regulation and morphogenesis. It is essential for dimorphic switching in haploid cells. This is Guanine nucleotide-binding protein alpha-3 subunit (FIL1) from Ustilago hordei (Barley covered smut fungus).